Reading from the N-terminus, the 364-residue chain is Probable dual-specificity RNA methyltransferase RlmN (364 aa).

The active-site Proton acceptor is the Glu-106. The 240-residue stretch at 112–351 folds into the Radical SAM core domain; that stretch reads YPHRNTVCIS…CTVRDTRGRE (240 aa). An intrachain disulfide couples Cys-119 to Cys-356. Residues Cys-126, Cys-130, and Cys-133 each coordinate [4Fe-4S] cluster. Residues 177–178, Ser-211, 234–236, and Asn-313 each bind S-adenosyl-L-methionine; these read GE and SLH. The active-site S-methylcysteine intermediate is Cys-356.

This sequence belongs to the radical SAM superfamily. RlmN family. It depends on [4Fe-4S] cluster as a cofactor.

It is found in the cytoplasm. It carries out the reaction adenosine(2503) in 23S rRNA + 2 reduced [2Fe-2S]-[ferredoxin] + 2 S-adenosyl-L-methionine = 2-methyladenosine(2503) in 23S rRNA + 5'-deoxyadenosine + L-methionine + 2 oxidized [2Fe-2S]-[ferredoxin] + S-adenosyl-L-homocysteine. The catalysed reaction is adenosine(37) in tRNA + 2 reduced [2Fe-2S]-[ferredoxin] + 2 S-adenosyl-L-methionine = 2-methyladenosine(37) in tRNA + 5'-deoxyadenosine + L-methionine + 2 oxidized [2Fe-2S]-[ferredoxin] + S-adenosyl-L-homocysteine. Specifically methylates position 2 of adenine 2503 in 23S rRNA and position 2 of adenine 37 in tRNAs. The chain is Probable dual-specificity RNA methyltransferase RlmN from Mycolicibacterium paratuberculosis (strain ATCC BAA-968 / K-10) (Mycobacterium paratuberculosis).